The primary structure comprises 109 residues: Nucleoid-associated protein LBUL_1514 (109 aa).

It belongs to the YbaB/EbfC family. In terms of assembly, homodimer.

Its subcellular location is the cytoplasm. It localises to the nucleoid. Binds to DNA and alters its conformation. May be involved in regulation of gene expression, nucleoid organization and DNA protection. The chain is Nucleoid-associated protein LBUL_1514 from Lactobacillus delbrueckii subsp. bulgaricus (strain ATCC BAA-365 / Lb-18).